A 350-amino-acid polypeptide reads, in one-letter code: GTP 3',8-cyclase (350 aa).

Residues 27-245 enclose the Radical SAM core domain; that stretch reads TFGRIATDLR…LRAHFTLVPD (219 aa). R36 contacts GTP. 2 residues coordinate [4Fe-4S] cluster: C43 and C47. Y49 contributes to the S-adenosyl-L-methionine binding site. C50 is a binding site for [4Fe-4S] cluster. R87 provides a ligand contact to GTP. S-adenosyl-L-methionine is bound at residue G91. T118 is a binding site for GTP. Position 142 (S142) interacts with S-adenosyl-L-methionine. K179 contacts GTP. M213 is a binding site for S-adenosyl-L-methionine. 2 residues coordinate [4Fe-4S] cluster: C277 and C280. Position 282-284 (282-284) interacts with GTP; that stretch reads RTR. C294 is a [4Fe-4S] cluster binding site.

The protein belongs to the radical SAM superfamily. MoaA family. In terms of assembly, monomer and homodimer. Requires [4Fe-4S] cluster as cofactor.

The enzyme catalyses GTP + AH2 + S-adenosyl-L-methionine = (8S)-3',8-cyclo-7,8-dihydroguanosine 5'-triphosphate + 5'-deoxyadenosine + L-methionine + A + H(+). It functions in the pathway cofactor biosynthesis; molybdopterin biosynthesis. Functionally, catalyzes the cyclization of GTP to (8S)-3',8-cyclo-7,8-dihydroguanosine 5'-triphosphate. The chain is GTP 3',8-cyclase from Mycobacterium sp. (strain JLS).